A 323-amino-acid polypeptide reads, in one-letter code: Oligodendrocyte transcription factor 2 (323 aa).

Residues 1–13 (MDSDASLVSSRPS) show a composition bias toward polar residues. The segment at 1-107 (MDSDASLVSS…KKQMTEPELQ (107 aa)) is disordered. Over residues 77–93 (SSSSSTSSSTSSAATSS) the composition is skewed to low complexity. The region spanning 108 to 162 (QLRLKINSRERKRMHDLNIAMDGLREVMPYAHGPSVRKLSKIATLLLARNYILML) is the bHLH domain.

As to quaternary structure, interacts with NKX2-2. Interacts with ZNF488. As to expression, expressed specifically in the brain.

It localises to the nucleus. The protein resides in the cytoplasm. Required for oligodendrocyte and motor neuron specification in the spinal cord, as well as for the development of somatic motor neurons in the hindbrain. Functions together with ZNF488 to promote oligodendrocyte differentiation. Cooperates with OLIG1 to establish the pMN domain of the embryonic neural tube. Antagonist of V2 interneuron and of NKX2-2-induced V3 interneuron development. This is Oligodendrocyte transcription factor 2 (Olig2) from Mus musculus (Mouse).